We begin with the raw amino-acid sequence, 863 residues long: DNA ligase (863 aa).

Residues 76–80 (DAAYD), 125–126 (SL), and glutamate 159 contribute to the NAD(+) site. Catalysis depends on lysine 161, which acts as the N6-AMP-lysine intermediate. NAD(+)-binding residues include arginine 182 and glutamate 221. Residues 237-256 (EDAGRPPFANPRNAAAGSLR) form a disordered region. Positions 241-253 (RPPFANPRNAAAG) are enriched in low complexity. Positions 346 and 370 each coordinate NAD(+). Cysteine 467, cysteine 470, cysteine 486, and cysteine 492 together coordinate Zn(2+). The 83-residue stretch at 781–863 (GLPQTLEGKS…DTLLATGDVQ (83 aa)) folds into the BRCT domain.

The protein belongs to the NAD-dependent DNA ligase family. LigA subfamily. Mg(2+) is required as a cofactor. Mn(2+) serves as cofactor.

The enzyme catalyses NAD(+) + (deoxyribonucleotide)n-3'-hydroxyl + 5'-phospho-(deoxyribonucleotide)m = (deoxyribonucleotide)n+m + AMP + beta-nicotinamide D-nucleotide.. Its function is as follows. DNA ligase that catalyzes the formation of phosphodiester linkages between 5'-phosphoryl and 3'-hydroxyl groups in double-stranded DNA using NAD as a coenzyme and as the energy source for the reaction. It is essential for DNA replication and repair of damaged DNA. The polypeptide is DNA ligase (Bifidobacterium animalis subsp. lactis (strain AD011)).